Here is a 973-residue protein sequence, read N- to C-terminus: Isoleucine--tRNA ligase, mitochondrial (973 aa).

The 'HIGH' region motif lies at 87 to 97; that stretch reads PFANGRLHIGH. A 'KMSKS' region motif is present at residues 625-629; sequence KQSKS. Position 628 (K628) interacts with ATP.

The protein belongs to the class-I aminoacyl-tRNA synthetase family.

The protein resides in the cytoplasm. The protein localises to the mitochondrion matrix. It carries out the reaction tRNA(Ile) + L-isoleucine + ATP = L-isoleucyl-tRNA(Ile) + AMP + diphosphate. The sequence is that of Isoleucine--tRNA ligase, mitochondrial (ism1) from Schizosaccharomyces pombe (strain 972 / ATCC 24843) (Fission yeast).